The sequence spans 201 residues: Cytochrome c4 (201 aa).

The first 20 residues, 1 to 20, serve as a signal peptide directing secretion; that stretch reads MNKLLVSLLLTLGLTGLAHA. Residues Cys-34, Cys-37, His-38, Met-77, Cys-130, Cys-133, His-134, and Met-178 each coordinate heme c.

Post-translationally, binds 2 heme c groups covalently per subunit.

Its subcellular location is the periplasm. In terms of biological role, diheme, high potential cytochrome c believed to be an intermediate electron donor to terminal oxidation systems. This is Cytochrome c4 (cc4) from Pseudomonas aeruginosa (strain ATCC 15692 / DSM 22644 / CIP 104116 / JCM 14847 / LMG 12228 / 1C / PRS 101 / PAO1).